Here is a 549-residue protein sequence, read N- to C-terminus: MTRKRPALAEPVSSSRSRVTRRSTTGAPSSKKKRSPEPESDADSEDDYDGPSTSQTKKLKRGNSSTNRGKAANKTKRGSFQVKQEIMDDDENEEKIDGEVENGITSREHSPDPSTFKKTAKLQTKKKKKKESPPETPPTSPSPSPSRSVSPSTTKSDISSKKGRKAVVNSVSKVKIEKESTPVKTNGRNLPPKRKKKPVEEETAEEIKLRERAERKARRIEEAKNRPKLTIEQKLAKLRKKKERRERRKEQEKEESMRQKYGQRKIKAEASKWNFGPISSINQRRRDEMMAYFPKANFLAEDGVPKVMNNFRRATVKYNMEVLNPFITCGICDGYIVDATTIIDCMHTFCKSCLLTYFESDNNTCPTCGTFIHGSHPTHYVTYDRAVNELVNQFVPKMENNELDVRKTFLRDCREALGIDTAAEDRERKERLERERITGTNRCYPLERPRFSHHRDDCQVTVNLLPGTANLPLITRPYVRCSEMTTMNTLKKFLSLQIWDDQSRYSDLDMFCDGQLMGKDFSVRFVWMMKRRGQPKSEPLIIRYHMTRT.

Residues 1 to 263 (MTRKRPALAE…EESMRQKYGQ (263 aa)) form a disordered region. Residues 12 to 29 (VSSSRSRVTRRSTTGAPS) are compositionally biased toward low complexity. 2 stretches are compositionally biased toward acidic residues: residues 38–49 (PESDADSEDDYD) and 87–100 (MDDD…DGEV). The span at 118–130 (KTAKLQTKKKKKK) shows a compositional bias: basic residues. The segment covering 134–144 (PETPPTSPSPS) has biased composition (pro residues). Residues 145-156 (PSRSVSPSTTKS) are compositionally biased toward low complexity. The span at 205-235 (EEIKLRERAERKARRIEEAKNRPKLTIEQKL) shows a compositional bias: basic and acidic residues. A coiled-coil region spans residues 206–260 (EIKLRERAERKARRIEEAKNRPKLTIEQKLAKLRKKKERRERRKEQEKEESMRQK). The span at 236-247 (AKLRKKKERRER) shows a compositional bias: basic residues. The segment covering 248–258 (RKEQEKEESMR) has biased composition (basic and acidic residues). The segment at 329–368 (CGICDGYIVDATTIIDCMHTFCKSCLLTYFESDNNTCPTC) adopts an RING-type zinc-finger fold.

As to quaternary structure, component of a PRC1-like complex.

The protein resides in the nucleus. Its subcellular location is the nucleolus. Component of a Polycomb group (PcG) multiprotein PRC1-like complex, a complex class required to maintain the transcriptionally repressive state of many genes, throughout development. Required for ubiquitination of histone H2A. Plays a role in the formation of the male-specific genital sensilla (simple sense organs) known as rays. Required for normal migration of the hermaphrodite specific neurons (HSN) and for extension of some neuronal processes. Represses vulval fates in hypodermal cells that do not normally contribute to vulval development. The protein is Polycomb group RING finger protein 3 homolog mig-32 of Caenorhabditis elegans.